The sequence spans 478 residues: Protein nucleotidyltransferase YdiU (478 aa).

Gly-83, Gly-85, Arg-86, Lys-106, Asp-118, Gly-119, Arg-169, and Arg-176 together coordinate ATP. The Proton acceptor role is filled by Asp-245. Residues Asn-246 and Asp-255 each coordinate Mg(2+). Asp-255 is a binding site for ATP.

It belongs to the SELO family. Requires Mg(2+) as cofactor. Mn(2+) serves as cofactor.

The catalysed reaction is L-seryl-[protein] + ATP = 3-O-(5'-adenylyl)-L-seryl-[protein] + diphosphate. It catalyses the reaction L-threonyl-[protein] + ATP = 3-O-(5'-adenylyl)-L-threonyl-[protein] + diphosphate. The enzyme catalyses L-tyrosyl-[protein] + ATP = O-(5'-adenylyl)-L-tyrosyl-[protein] + diphosphate. It carries out the reaction L-histidyl-[protein] + UTP = N(tele)-(5'-uridylyl)-L-histidyl-[protein] + diphosphate. The catalysed reaction is L-seryl-[protein] + UTP = O-(5'-uridylyl)-L-seryl-[protein] + diphosphate. It catalyses the reaction L-tyrosyl-[protein] + UTP = O-(5'-uridylyl)-L-tyrosyl-[protein] + diphosphate. Functionally, nucleotidyltransferase involved in the post-translational modification of proteins. It can catalyze the addition of adenosine monophosphate (AMP) or uridine monophosphate (UMP) to a protein, resulting in modifications known as AMPylation and UMPylation. The protein is Protein nucleotidyltransferase YdiU of Exiguobacterium sp. (strain ATCC BAA-1283 / AT1b).